Consider the following 808-residue polypeptide: Probable E3 ubiquitin-protein ligase MARCHF10 (808 aa).

Disordered stretches follow at residues 33 to 81 (LRRQ…LTEP), 101 to 268 (QTSV…RKAS), and 284 to 415 (SRRE…EVGV). Over residues 34–49 (RRQEYRRDPNEKKRDQ) the composition is skewed to basic and acidic residues. Positions 237-249 (QAFQGKNSPQVLS) are enriched in polar residues. Composition is skewed to basic and acidic residues over residues 330 to 349 (KNFE…RSEP) and 379 to 397 (LPDR…ENAK). Residues 651 to 721 (DSEEEGDLCR…EMCKQGLLVD (71 aa)) form an RING-CH-type zinc finger. Positions 659, 662, 677, 679, 687, 690, 711, and 714 each coordinate Zn(2+). Residues 773 to 808 (ERERLSRNYPQPRTEENENSELGDGNEGSISQSQVV) form a disordered region.

It catalyses the reaction S-ubiquitinyl-[E2 ubiquitin-conjugating enzyme]-L-cysteine + [acceptor protein]-L-lysine = [E2 ubiquitin-conjugating enzyme]-L-cysteine + N(6)-ubiquitinyl-[acceptor protein]-L-lysine.. It functions in the pathway protein modification; protein ubiquitination. Its function is as follows. E3 ubiquitin-protein ligase. E3 ubiquitin ligases accept ubiquitin from an E2 ubiquitin-conjugating enzyme in the form of a thioester and then directly transfer the ubiquitin to targeted substrates. The protein is Probable E3 ubiquitin-protein ligase MARCHF10 of Homo sapiens (Human).